We begin with the raw amino-acid sequence, 206 residues long: LexA repressor (206 aa).

The H-T-H motif DNA-binding region spans 28 to 48 (RAEIARRLGFKSANAAEEHLK). Residues serine 123 and lysine 160 each act as for autocatalytic cleavage activity in the active site.

Belongs to the peptidase S24 family. As to quaternary structure, homodimer.

It catalyses the reaction Hydrolysis of Ala-|-Gly bond in repressor LexA.. Its function is as follows. Represses a number of genes involved in the response to DNA damage (SOS response), including recA and lexA. In the presence of single-stranded DNA, RecA interacts with LexA causing an autocatalytic cleavage which disrupts the DNA-binding part of LexA, leading to derepression of the SOS regulon and eventually DNA repair. The chain is LexA repressor from Shewanella halifaxensis (strain HAW-EB4).